The sequence spans 350 residues: MRFIDQTEIFVKAGDGGDGMVAFRREKYVPAGGPAGGNGGRGGSVILQASTQLQTLLDFKYKHQFVAEDGKRGGPKNLTGASGQDRLIEVPCGTVIYDADSMTLLGDLTTNGQTLTVAQGGKGGLGNKHFLSNRNRAPEHALPGLPGEEFRLHLELKLLAEVGIIGLPNAGKSTLISVLSAARPKIADYPFTTLIPNLGVVPRATGDGTVFADIPGLIEGAHEGVGLGHDFLRHVERTRLLVHLVDATAEDPEQDYQTIQKELSAYGQGLQNRPQLLVLNKIDAMDSEQLLEKQACLEQMSGSPVYLISAVAQQGLDTLLQQVWEELDRLPNDLQEAPIPVLDSPILRET.

In terms of domain architecture, Obg spans 1–159 (MRFIDQTEIF…FRLHLELKLL (159 aa)). One can recognise an OBG-type G domain in the interval 160-328 (AEVGIIGLPN…LLQQVWEELD (169 aa)). GTP-binding positions include 166–173 (GLPNAGKS), 191–195 (FTTLI), 213–216 (DIPG), 280–283 (NKID), and 309–311 (SAV). The Mg(2+) site is built by Ser173 and Thr193.

The protein belongs to the TRAFAC class OBG-HflX-like GTPase superfamily. OBG GTPase family. Monomer. It depends on Mg(2+) as a cofactor.

The protein localises to the cytoplasm. Its function is as follows. An essential GTPase which binds GTP, GDP and possibly (p)ppGpp with moderate affinity, with high nucleotide exchange rates and a fairly low GTP hydrolysis rate. Plays a role in control of the cell cycle, stress response, ribosome biogenesis and in those bacteria that undergo differentiation, in morphogenesis control. The sequence is that of GTPase Obg from Acaryochloris marina (strain MBIC 11017).